Consider the following 534-residue polypeptide: (R)-citramalate synthase (534 aa).

One can recognise a Pyruvate carboxyltransferase domain in the interval 11–274; it reads FHVFDTTLRD…KQVLPEGRLR (264 aa).

This sequence belongs to the alpha-IPM synthase/homocitrate synthase family.

The catalysed reaction is pyruvate + acetyl-CoA + H2O = (3R)-citramalate + CoA + H(+). It functions in the pathway amino-acid biosynthesis; L-isoleucine biosynthesis; 2-oxobutanoate from pyruvate: step 1/3. In terms of biological role, catalyzes the condensation of pyruvate and acetyl-coenzyme A to form (R)-citramalate. This is (R)-citramalate synthase from Streptomyces coelicolor (strain ATCC BAA-471 / A3(2) / M145).